Reading from the N-terminus, the 233-residue chain is Nuclear speckle RNA-binding protein A (233 aa).

Disordered regions lie at residues 1–54 (MADG…VPDT), 68–92 (VQSG…GGNV), and 214–233 (FLRL…RGRR). The span at 71 to 91 (GEGGSVSMGRSGGGGGGGGGN) shows a compositional bias: gly residues. The 87-residue stretch at 136 to 222 (NTLYVEGLPS…KFLRLQFSRK (87 aa)) folds into the RRM domain.

In terms of tissue distribution, expressed in root meristems, lateral root primordia and root vascular tissues.

It localises to the nucleus speckle. Its function is as follows. Alternative splicing (AS) regulator that binds to specific mRNAs and modulates auxin effects on the transcriptome. Displaced from its targets upon binding to AS competitor long non-coding RNA (ASCO-RNA). This Arabidopsis thaliana (Mouse-ear cress) protein is Nuclear speckle RNA-binding protein A.